We begin with the raw amino-acid sequence, 943 residues long: Isoleucine--tRNA ligase 1 (943 aa).

The 'HIGH' region signature appears at 58–68; the sequence is PYANGTIHIGH. Glu-567 provides a ligand contact to L-isoleucyl-5'-AMP. The 'KMSKS' region motif lies at 608–612; it reads KMSKS. Residue Lys-611 coordinates ATP. Zn(2+) contacts are provided by Cys-906, Cys-909, Cys-926, and Cys-929.

It belongs to the class-I aminoacyl-tRNA synthetase family. IleS type 1 subfamily. In terms of assembly, monomer. The cofactor is Zn(2+).

It localises to the cytoplasm. It carries out the reaction tRNA(Ile) + L-isoleucine + ATP = L-isoleucyl-tRNA(Ile) + AMP + diphosphate. Its function is as follows. Catalyzes the attachment of isoleucine to tRNA(Ile). As IleRS can inadvertently accommodate and process structurally similar amino acids such as valine, to avoid such errors it has two additional distinct tRNA(Ile)-dependent editing activities. One activity is designated as 'pretransfer' editing and involves the hydrolysis of activated Val-AMP. The other activity is designated 'posttransfer' editing and involves deacylation of mischarged Val-tRNA(Ile). Functionally, confers resistance to the antibiotic mupirocin (pseudomonic acid A), an Ile-analog produced by P.fluorescens NCIMB 10586 itself that competitively inhibits activation by Ile-tRNA synthetase, thus inhibiting protein biosynthesis. This chain is Isoleucine--tRNA ligase 1 (ileS1), found in Pseudomonas fluorescens.